The primary structure comprises 526 residues: mRNA export factor ICP27 homolog (526 aa).

Zn(2+) contacts are provided by Cys239, His344, Cys346, and Cys351. The segment at 239–351 adopts a CHC2-type zinc-finger fold; sequence CVFNDNGHGD…NNHQCDDIGC (113 aa).

It belongs to the HHV-1 ICP27 protein family.

The protein resides in the virion tegument. It is found in the virion. The protein localises to the host nucleus. It localises to the host cytoplasm. Its function is as follows. Immediate early (EI) protein that plays many roles during productive infection including regulation of viral gene expression and nuclear export of intronless viral RNAs. The sequence is that of mRNA export factor ICP27 homolog from Human herpesvirus 7 (strain JI) (HHV-7).